Reading from the N-terminus, the 358-residue chain is MAGAKDSGCDDDLRIAGGCDPGKRGNPEDSSSPVEVSCSICLESVLDDGTRSKAKLQCGHQFHLDCIGSAFNMKGAMQCPNCRNVEKGQWLYANGSTRPFPEFSMEDWIPEEDLYGLSYPEMQYRVHWCPFGELSQAAASFEELEPATTTYHTEFHGHHAAAVNHSYLAYVGPGPAATPRTSDNNSTDDHPWNSHSNDHFHQLPVAPQYHHHSPSFSLPAAHVVDGEVDSSAARGLPYAHPFLFSHRSNQRSSPAINSYQGSSTQMREQHHAYNHQRQQHHANGPTLASPLISMTRRGLPPPPPPPPMPDQNVGFFIYPGGHHEPETDQIHAWERDWFPHFPVPSNHRTIPSLWHRHF.

The segment at 1-34 (MAGAKDSGCDDDLRIAGGCDPGKRGNPEDSSSPV) is disordered. Residues 38–83 (CSICLESVLDDGTRSKAKLQCGHQFHLDCIGSAFNMKGAMQCPNCR) form an RING-type; atypical zinc finger. Disordered regions lie at residues 174–201 (GPAATPRTSDNNSTDDHPWNSHSNDHFH) and 248–313 (SNQR…DQNV). The segment covering 187 to 201 (TDDHPWNSHSNDHFH) has biased composition (basic and acidic residues). The span at 248-266 (SNQRSSPAINSYQGSSTQM) shows a compositional bias: polar residues. The span at 299–309 (LPPPPPPPPMP) shows a compositional bias: pro residues.

It localises to the nucleus. The enzyme catalyses S-ubiquitinyl-[E2 ubiquitin-conjugating enzyme]-L-cysteine + [acceptor protein]-L-lysine = [E2 ubiquitin-conjugating enzyme]-L-cysteine + N(6)-ubiquitinyl-[acceptor protein]-L-lysine.. It functions in the pathway protein modification; protein ubiquitination. Its function is as follows. Mediates phytochrome (phyA and phyB)-controlled seedling deetiolation responses such as hypocotyl elongation in response to red and far-red light. Required for light-induced expression of LHCB3 and CHALCONE SYNTHASE (CHS). Negatively regulates CONSTANS (CO) and FLOWERING LOCUS T (FT) expression and photoperiodic flowering. This is E3 ubiquitin-protein ligase RFI2 from Arabidopsis thaliana (Mouse-ear cress).